A 321-amino-acid chain; its full sequence is Lipoyl synthase (321 aa).

Residues Cys68, Cys73, Cys79, Cys94, Cys98, Cys101, and Ser308 each coordinate [4Fe-4S] cluster. The Radical SAM core domain occupies 80–297; the sequence is FNHGTATFMI…KEIALELGFT (218 aa).

This sequence belongs to the radical SAM superfamily. Lipoyl synthase family. The cofactor is [4Fe-4S] cluster.

The protein localises to the cytoplasm. The enzyme catalyses [[Fe-S] cluster scaffold protein carrying a second [4Fe-4S](2+) cluster] + N(6)-octanoyl-L-lysyl-[protein] + 2 oxidized [2Fe-2S]-[ferredoxin] + 2 S-adenosyl-L-methionine + 4 H(+) = [[Fe-S] cluster scaffold protein] + N(6)-[(R)-dihydrolipoyl]-L-lysyl-[protein] + 4 Fe(3+) + 2 hydrogen sulfide + 2 5'-deoxyadenosine + 2 L-methionine + 2 reduced [2Fe-2S]-[ferredoxin]. Its pathway is protein modification; protein lipoylation via endogenous pathway; protein N(6)-(lipoyl)lysine from octanoyl-[acyl-carrier-protein]: step 2/2. Its function is as follows. Catalyzes the radical-mediated insertion of two sulfur atoms into the C-6 and C-8 positions of the octanoyl moiety bound to the lipoyl domains of lipoate-dependent enzymes, thereby converting the octanoylated domains into lipoylated derivatives. The protein is Lipoyl synthase of Vibrio atlanticus (strain LGP32) (Vibrio splendidus (strain Mel32)).